Here is a 399-residue protein sequence, read N- to C-terminus: MAKEKFNRTNPHVNIGTIGHVYHGKTTLSAAISAVLSLKGLAEMKDYDNIDNAPQEKERGITIATSHIEYETETRHYAHVDCPGHADYVKNMITGAAQMDGAILVVSAADGPMPQTREHILLSRQVGVPHIVVFLNKQDMVDDQELLELVEMEVRELLSAYEFPGDDTPIVAGSALRALEEAKAGNVGEWGEKVLKLMAEVDSYIPTPERDTEKTFLMPVEDVFSIAGRGTVVTGRIERGVVKVGDEVEIVGIRATQKTTVTGVEMFRKELEKGEAGDNVGVLLRGTKKEEVERGMVLCKPGSITPHKKFEEEIYVLSKEEGGRHTPFFTNYRPQFYVRTTDVTGSITLPEGVEMVMPGDNVKITVELISPVALELGTKFAIREGGRTVGAGVVSNIIE.

A tr-type G domain is found at 10–209 (NPHVNIGTIG…EVDSYIPTPE (200 aa)). The segment at 19-26 (GHVYHGKT) is G1. Residue 19-26 (GHVYHGKT) participates in GTP binding. A Mg(2+)-binding site is contributed by T26. Residues 60 to 64 (GITIA) form a G2 region. Residues 81-84 (DCPG) form a G3 region. Residues 81–85 (DCPGH) and 136–139 (NKQD) each bind GTP. A G4 region spans residues 136–139 (NKQD). The G5 stretch occupies residues 174–176 (SAL).

It belongs to the TRAFAC class translation factor GTPase superfamily. Classic translation factor GTPase family. EF-Tu/EF-1A subfamily. In terms of assembly, monomer.

The protein resides in the cytoplasm. It catalyses the reaction GTP + H2O = GDP + phosphate + H(+). Functionally, GTP hydrolase that promotes the GTP-dependent binding of aminoacyl-tRNA to the A-site of ribosomes during protein biosynthesis. This chain is Elongation factor Tu, found in Helicobacter pylori (strain J99 / ATCC 700824) (Campylobacter pylori J99).